Consider the following 202-residue polypeptide: Large ribosomal subunit protein uL18 (202 aa).

This sequence belongs to the universal ribosomal protein uL18 family. As to quaternary structure, part of the 50S ribosomal subunit. Contacts the 5S and 23S rRNAs.

Its function is as follows. This is one of the proteins that bind and probably mediate the attachment of the 5S RNA into the large ribosomal subunit, where it forms part of the central protuberance. The protein is Large ribosomal subunit protein uL18 of Methanopyrus kandleri (strain AV19 / DSM 6324 / JCM 9639 / NBRC 100938).